A 185-amino-acid polypeptide reads, in one-letter code: Elongation factor P (185 aa).

Belongs to the elongation factor P family.

It localises to the cytoplasm. Its pathway is protein biosynthesis; polypeptide chain elongation. In terms of biological role, involved in peptide bond synthesis. Stimulates efficient translation and peptide-bond synthesis on native or reconstituted 70S ribosomes in vitro. Probably functions indirectly by altering the affinity of the ribosome for aminoacyl-tRNA, thus increasing their reactivity as acceptors for peptidyl transferase. The chain is Elongation factor P from Alkaliphilus metalliredigens (strain QYMF).